Consider the following 465-residue polypeptide: Argininosuccinate lyase (465 aa).

This sequence belongs to the lyase 1 family. Argininosuccinate lyase subfamily.

The protein resides in the cytoplasm. It catalyses the reaction 2-(N(omega)-L-arginino)succinate = fumarate + L-arginine. Its pathway is amino-acid biosynthesis; L-arginine biosynthesis; L-arginine from L-ornithine and carbamoyl phosphate: step 3/3. This is Argininosuccinate lyase from Bradyrhizobium diazoefficiens (strain JCM 10833 / BCRC 13528 / IAM 13628 / NBRC 14792 / USDA 110).